Consider the following 309-residue polypeptide: Putative S-adenosyl-L-methionine-dependent methyltransferase Mvan_0104 (309 aa).

S-adenosyl-L-methionine contacts are provided by residues aspartate 134 and 163 to 164 (DL).

It belongs to the UPF0677 family.

In terms of biological role, exhibits S-adenosyl-L-methionine-dependent methyltransferase activity. This chain is Putative S-adenosyl-L-methionine-dependent methyltransferase Mvan_0104, found in Mycolicibacterium vanbaalenii (strain DSM 7251 / JCM 13017 / BCRC 16820 / KCTC 9966 / NRRL B-24157 / PYR-1) (Mycobacterium vanbaalenii).